The primary structure comprises 315 residues: D-alanine--D-alanine ligase (315 aa).

Residues 101 to 297 (KHIFRSLNID…FNELVKIIIE (197 aa)) form the ATP-grasp domain. ATP is bound at residue 128–181 (KIDYPYVLKPINEGSSIGVYIIFSHEDYLELKNNSSTIMEKMIVEEYIPGIELH). 3 residues coordinate Mg(2+): Asp249, Glu263, and Asn265.

This sequence belongs to the D-alanine--D-alanine ligase family. It depends on Mg(2+) as a cofactor. Mn(2+) serves as cofactor.

The protein resides in the cytoplasm. The enzyme catalyses 2 D-alanine + ATP = D-alanyl-D-alanine + ADP + phosphate + H(+). The protein operates within cell wall biogenesis; peptidoglycan biosynthesis. Its function is as follows. Cell wall formation. This chain is D-alanine--D-alanine ligase, found in Wolbachia pipientis wMel.